An 89-amino-acid chain; its full sequence is Small ribosomal subunit protein uS15 (89 aa).

The interval Met-1–Gly-23 is disordered. The segment covering Asn-10–Gly-23 has biased composition (polar residues).

The protein belongs to the universal ribosomal protein uS15 family. In terms of assembly, part of the 30S ribosomal subunit. Forms a bridge to the 50S subunit in the 70S ribosome, contacting the 23S rRNA.

Functionally, one of the primary rRNA binding proteins, it binds directly to 16S rRNA where it helps nucleate assembly of the platform of the 30S subunit by binding and bridging several RNA helices of the 16S rRNA. In terms of biological role, forms an intersubunit bridge (bridge B4) with the 23S rRNA of the 50S subunit in the ribosome. This Prochlorococcus marinus (strain NATL2A) protein is Small ribosomal subunit protein uS15.